The following is a 107-amino-acid chain: UPF0473 protein Ldb1604 (107 aa).

The protein belongs to the UPF0473 family.

The protein is UPF0473 protein Ldb1604 of Lactobacillus delbrueckii subsp. bulgaricus (strain ATCC 11842 / DSM 20081 / BCRC 10696 / JCM 1002 / NBRC 13953 / NCIMB 11778 / NCTC 12712 / WDCM 00102 / Lb 14).